Here is a 520-residue protein sequence, read N- to C-terminus: Putative cytochrome P450 CYP13A5 (520 aa).

Heme is bound at residue C464.

The protein belongs to the cytochrome P450 family. Heme serves as cofactor.

Its function is as follows. Cytochromes P450 are a group of heme-thiolate monooxygenases. They oxidize a variety of structurally unrelated compounds, including steroids, fatty acids, and xenobiotics. The sequence is that of Putative cytochrome P450 CYP13A5 (cyp-13A5) from Caenorhabditis elegans.